The sequence spans 550 residues: Tyrosine-protein phosphatase 1 (550 aa).

Residues 260–539 form the Tyrosine-protein phosphatase domain; sequence LYQKFLRLQS…KYVYDLIDSL (280 aa). Phosphoserine is present on residues S318 and S320. Residue C470 is the Phosphocysteine intermediate of the active site.

It belongs to the protein-tyrosine phosphatase family. Non-receptor class subfamily.

It is found in the cytoplasm. The enzyme catalyses O-phospho-L-tyrosyl-[protein] + H2O = L-tyrosyl-[protein] + phosphate. Its function is as follows. Plays a role in inhibiting the onset of mitosis. Dephosphorylates sty1/spc1 and wis1/spc2/sty2. The sequence is that of Tyrosine-protein phosphatase 1 (pyp1) from Schizosaccharomyces pombe (strain 972 / ATCC 24843) (Fission yeast).